The chain runs to 1888 residues: Zinc finger protein 106 (1888 aa).

Residues 5–29 (RKCILCHIVYGSKKEMDEHMRSMLH) form a C2H2-type 1; atypical zinc finger. A C2H2-type 2; atypical zinc finger spans residues 43–67 (HECRVCRVTEVGLSAYAKHISGQLH). The segment at 68 to 187 (KDNVDAQERE…GPRGSSVWHK (120 aa)) is disordered. The segment covering 75-89 (EREDDGKEEEEEEYF) has biased composition (acidic residues). Basic and acidic residues-rich tracts occupy residues 90 to 108 (DKEL…RQDE), 118 to 138 (SDDR…DRES), and 150 to 160 (PQRDWKWEKDG). K91 is covalently cross-linked (Glycyl lysine isopeptide (Lys-Gly) (interchain with G-Cter in SUMO2)). K155 participates in a covalent cross-link: Glycyl lysine isopeptide (Lys-Gly) (interchain with G-Cter in SUMO2). The span at 161 to 175 (FNSTRKNSFPHSLRN) shows a compositional bias: polar residues. Residues K265 and K309 each participate in a glycyl lysine isopeptide (Lys-Gly) (interchain with G-Cter in SUMO2) cross-link. Disordered stretches follow at residues 287–326 (KKSN…DTFP) and 338–362 (RESQ…TKAR). The span at 296 to 311 (SQERCKWQRQDRDKAA) shows a compositional bias: basic and acidic residues. Over residues 342–357 (TTKQTDTAASKINGKN) the composition is skewed to polar residues. Residues K375, K384, K390, K435, K469, and K479 each participate in a glycyl lysine isopeptide (Lys-Gly) (interchain with G-Cter in SUMO2) cross-link. Disordered regions lie at residues 410-437 (KPVD…HKAI) and 453-525 (TEQS…TSKS). The span at 481–491 (GPHKQNLKNRS) shows a compositional bias: basic residues. The segment covering 507 to 525 (LLNTSTLEGSHGSSYTSKS) has biased composition (polar residues). Residues K524, K534, and K544 each participate in a glycyl lysine isopeptide (Lys-Gly) (interchain with G-Cter in SUMO2) cross-link. The disordered stretch occupies residues 537–617 (KTVSGTQKEP…SAMTSDAENH (81 aa)). A compositionally biased stretch (polar residues) spans 551–572 (NNTSQKAQDTVLQCPKTLQNPL). A Glycyl lysine isopeptide (Lys-Gly) (interchain with G-Cter in SUMO2) cross-link involves residue K577. Basic and acidic residues predominate over residues 577 to 593 (KRMENDAKESSVEESAK). Polar residues predominate over residues 597–613 (SIESQPHSAGNSAMTSD). A Glycyl lysine isopeptide (Lys-Gly) (interchain with G-Cter in SUMO2) cross-link involves residue K620. The disordered stretch occupies residues 635-661 (STHTVDKEQGSQIPGTPENLSTSPRNS). Over residues 644 to 661 (GSQIPGTPENLSTSPRNS) the composition is skewed to polar residues. Phosphoserine occurs at positions 657 and 677. Glycyl lysine isopeptide (Lys-Gly) (interchain with G-Cter in SUMO2) cross-links involve residues K687, K700, K721, K738, K758, K792, and K824. The disordered stretch occupies residues 696-728 (NNLVKSDGPFETESFEDTSLDTELQKPDLNNQP). 4 positions are modified to phosphoserine: S876, S878, S881, and S909. The tract at residues 894-920 (TGEGTGKENEAQQSPSPNTALSAAQSQ) is disordered. The segment covering 904 to 920 (AQQSPSPNTALSAAQSQ) has biased composition (polar residues). Residue K921 forms a Glycyl lysine isopeptide (Lys-Gly) (interchain with G-Cter in SUMO2) linkage. At S953 the chain carries Phosphoserine. Over residues 968–986 (ARDLHSQERSTPLSERHAQ) the composition is skewed to basic and acidic residues. Disordered regions lie at residues 968–1064 (ARDL…ERSQ), 1281–1461 (EQGN…SKKD), and 1468–1487 (QNPI…TSEL). The segment covering 992–1008 (GNSLSSNASSGHAVSSL) has biased composition (low complexity). Over residues 1013–1022 (TDSSCTSGAE) the composition is skewed to polar residues. The residue at position 1036 (T1036) is a Phosphothreonine. Phosphoserine is present on residues S1040, S1041, and S1046. Over residues 1050 to 1060 (KNKRRKIKGKK) the composition is skewed to basic residues. A compositionally biased stretch (polar residues) spans 1281 to 1296 (EQGNSRSKGNSPSCQS). Phosphoserine occurs at positions 1291, 1293, and 1296. K1310 is covalently cross-linked (Glycyl lysine isopeptide (Lys-Gly) (interchain with G-Cter in SUMO2)). Residues 1312-1321 (SSGSEACSSS) show a composition bias toward low complexity. Position 1313 is a phosphoserine (S1313). K1335 is covalently cross-linked (Glycyl lysine isopeptide (Lys-Gly) (interchain with G-Cter in SUMO2)). Residues 1338–1354 (QSPADQPEQQAESTLAS) are compositionally biased toward polar residues. Phosphoserine is present on S1339. The span at 1360–1373 (SKKKKKLRKKKTLR) shows a compositional bias: basic residues. Position 1381 is a phosphoserine (S1381). T1383 carries the post-translational modification Phosphothreonine. Glycyl lysine isopeptide (Lys-Gly) (interchain with G-Cter in SUMO2) cross-links involve residues K1391, K1403, K1406, and K1460. Over residues 1450–1461 (GDEKPDSPSKKD) the composition is skewed to basic and acidic residues. The segment covering 1470–1487 (PIETSRSGCDEVSSTSEL) has biased composition (polar residues). S1474 carries the phosphoserine modification. Glycyl lysine isopeptide (Lys-Gly) (interchain with G-Cter in SUMO2) cross-links involve residues K1492 and K1509. Positions 1509–1531 (KASKHSSEISSEPGDDEEPTEGS) are disordered. 6 WD repeats span residues 1534-1573 (GHQA…GVFE), 1575-1618 (HTSK…EQLQ), 1659-1700 (HGPR…LLRT), 1703-1742 (GHSK…RIYK), 1743-1780 (GHNH…RLQV), and 1783-1820 (GHKD…NYRC). Residue K1590 forms a Glycyl lysine isopeptide (Lys-Gly) (interchain with G-Cter in SUMO2) linkage. K1742 participates in a covalent cross-link: Glycyl lysine isopeptide (Lys-Gly) (interchain with G-Cter in SUMO2). The C2H2-type 3; atypical zinc-finger motif lies at 1818-1843 (YRCWWYGCTLIFGVVDHLKQHLLTDH). K1869 is covalently cross-linked (Glycyl lysine isopeptide (Lys-Gly) (interchain with G-Cter in SUMO2)).

Interacts with KNOP1. Interacts with TARDBP and NUP107. Interacts (via N-terminus) with RBM39. Interacts with the SH3 domains of FYN and GRB2. Post-translationally, phosphorylated by FYN in vitro. Widely expressed, with strongest expression in skeletal muscle, heart and brain (at protein level). Detected in spinal cord motor neurons.

Its subcellular location is the nucleus. It is found in the nucleolus. The protein localises to the nucleus speckle. Functionally, RNA-binding protein. Specifically binds to 5'-GGGGCC-3' sequence repeats in RNA. Essential for maintenance of peripheral motor neuron and skeletal muscle function. Required for normal expression and/or alternative splicing of a number of genes in spinal cord and skeletal muscle, including the neurite outgrowth inhibitor RTN4. Also contributes to normal mitochondrial respiratory function in motor neurons, via an unknown mechanism. The protein is Zinc finger protein 106 (Znf106) of Mus musculus (Mouse).